Consider the following 446-residue polypeptide: Tubulin gamma chain (446 aa).

142–148 (AGGTGSG) is a binding site for GTP.

The protein belongs to the tubulin family.

Its subcellular location is the cytoplasm. It localises to the cytoskeleton. The protein localises to the microtubule organizing center. It is found in the spindle pole body. Tubulin is the major constituent of microtubules. The gamma chain is found at microtubule organizing centers (MTOC) such as the spindle poles or the centrosome, suggesting that it is involved in the minus-end nucleation of microtubule assembly. The chain is Tubulin gamma chain (tug1) from Schizosaccharomyces japonicus (Fission yeast).